The primary structure comprises 245 residues: Uridylate kinase (245 aa).

16–19 (KLSG) serves as a coordination point for ATP. Glycine 58 serves as a coordination point for UMP. 2 residues coordinate ATP: glycine 59 and arginine 63. Residues aspartate 78 and 139–146 (TGNPFFTT) contribute to the UMP site. ATP is bound by residues threonine 166, tyrosine 172, and aspartate 175.

Belongs to the UMP kinase family. In terms of assembly, homohexamer.

The protein localises to the cytoplasm. The catalysed reaction is UMP + ATP = UDP + ADP. It participates in pyrimidine metabolism; CTP biosynthesis via de novo pathway; UDP from UMP (UMPK route): step 1/1. Its activity is regulated as follows. Inhibited by UTP. In terms of biological role, catalyzes the reversible phosphorylation of UMP to UDP. This is Uridylate kinase from Idiomarina loihiensis (strain ATCC BAA-735 / DSM 15497 / L2-TR).